A 414-amino-acid chain; its full sequence is MEQPSPVTRQSFDEWLVPTYAPADFIVVRGEGSTLWDQQGKSYIDFAGGIAVNALGHGHPAVRAALIEQADKVWHLGNGYTNEPVLRLAKQLIDATFAEKVFFCNSGAEANEAALKLARKYALDNFANKAGQQGEKNQIVAFRNAFHGRTLFTVSAGGQPKYSQDFAPLPGGIHHGIFNDLASAEHLITDQTCAVIVEPIQGEGGVLPADKEFLHGLRALCDRHNALLIFDEIQTGVGRTGELYAYMHYGVSPDVLTSAKALGGGFPIGAMLTTTKYASALSVGSHGTTFGGNPLACAVAGTVLSLINQPTLLAGVKARHQWFIDELAEINARHNVFAEIRGRGLLIGCVLNAQYAGKSKEIVQAAAQYGLIALIAGPDVVRFAPSLIISPKEIKEGLARLAMGIEQVCQKVTS.

Lys260 carries the post-translational modification N6-(pyridoxal phosphate)lysine.

This sequence belongs to the class-III pyridoxal-phosphate-dependent aminotransferase family. AstC subfamily. Requires pyridoxal 5'-phosphate as cofactor.

It catalyses the reaction N(2)-succinyl-L-ornithine + 2-oxoglutarate = N-succinyl-L-glutamate 5-semialdehyde + L-glutamate. The protein operates within amino-acid degradation; L-arginine degradation via AST pathway; L-glutamate and succinate from L-arginine: step 3/5. Its function is as follows. Catalyzes the transamination of N(2)-succinylornithine and alpha-ketoglutarate into N(2)-succinylglutamate semialdehyde and glutamate. Can also act as an acetylornithine aminotransferase. The protein is Succinylornithine transaminase of Yersinia pseudotuberculosis serotype I (strain IP32953).